The chain runs to 228 residues: UPF0173 metal-dependent hydrolase BcerKBAB4_4442 (228 aa).

This sequence belongs to the UPF0173 family.

This is UPF0173 metal-dependent hydrolase BcerKBAB4_4442 from Bacillus mycoides (strain KBAB4) (Bacillus weihenstephanensis).